The primary structure comprises 1001 residues: 2-oxoglutarate dehydrogenase E1 component (1001 aa).

It belongs to the alpha-ketoglutarate dehydrogenase family. Homodimer. Part of the 2-oxoglutarate dehydrogenase (OGDH) complex composed of E1 (2-oxoglutarate dehydrogenase), E2 (dihydrolipoamide succinyltransferase) and E3 (dihydrolipoamide dehydrogenase); the complex contains multiple copies of the three enzymatic components (E1, E2 and E3). The cofactor is thiamine diphosphate.

It carries out the reaction N(6)-[(R)-lipoyl]-L-lysyl-[protein] + 2-oxoglutarate + H(+) = N(6)-[(R)-S(8)-succinyldihydrolipoyl]-L-lysyl-[protein] + CO2. In terms of biological role, E1 component of the 2-oxoglutarate dehydrogenase (OGDH) complex which catalyzes the decarboxylation of 2-oxoglutarate, the first step in the conversion of 2-oxoglutarate to succinyl-CoA and CO(2). The protein is 2-oxoglutarate dehydrogenase E1 component of Brucella anthropi (strain ATCC 49188 / DSM 6882 / CCUG 24695 / JCM 21032 / LMG 3331 / NBRC 15819 / NCTC 12168 / Alc 37) (Ochrobactrum anthropi).